A 175-amino-acid polypeptide reads, in one-letter code: NADH-ubiquinone oxidoreductase chain 6 (175 aa).

Transmembrane regions (helical) follow at residues 1 to 21 (MMTY…VGFS), 25 to 45 (SPIY…GIVL), 48 to 68 (GGSF…LVVF), 88 to 108 (TVLS…GYCI), and 149 to 169 (YGTW…LVVM).

The protein belongs to the complex I subunit 6 family. Core subunit of respiratory chain NADH dehydrogenase (Complex I) which is composed of 45 different subunits.

It is found in the mitochondrion inner membrane. The enzyme catalyses a ubiquinone + NADH + 5 H(+)(in) = a ubiquinol + NAD(+) + 4 H(+)(out). Core subunit of the mitochondrial membrane respiratory chain NADH dehydrogenase (Complex I) which catalyzes electron transfer from NADH through the respiratory chain, using ubiquinone as an electron acceptor. Essential for the catalytic activity and assembly of complex I. The chain is NADH-ubiquinone oxidoreductase chain 6 (MT-ND6) from Urotrichus talpoides (Japanese shrew mole).